Here is a 457-residue protein sequence, read N- to C-terminus: D-hydantoinase (457 aa).

Residues His-57 and His-59 each contribute to the Zn(2+) site. The residue at position 69 (Ser-69) is a Phosphoserine. Residue Lys-148 participates in Zn(2+) binding. Lys-148 carries the post-translational modification N6-carboxylysine. Residue Tyr-153 participates in substrate binding. Positions 181 and 237 each coordinate Zn(2+). Thr-286 contributes to the substrate binding site. Residue Asp-313 participates in Zn(2+) binding. Asn-335 is a binding site for substrate.

Belongs to the metallo-dependent hydrolases superfamily. Hydantoinase/dihydropyrimidinase family. As to quaternary structure, homotetramer. Zn(2+) is required as a cofactor. In terms of processing, carboxylation allows a single lysine to coordinate two zinc ions.

Catalyzes the stereospecific hydrolysis of the cyclic amide bond of D-hydantoin derivatives. This is D-hydantoinase (hyuA) from Rhizobium radiobacter (Agrobacterium tumefaciens).